The primary structure comprises 640 residues: MPIITLPNGDQKSFDHPVSVMEVAQSIGPGLAKNTVAGRVNDRLVDACDLITEDSTLQIITPKDEEGLEIIRHSCAHLVGHAVKQLFPEAKMVIGPVIEEGFYYDIWMPCPFTLDDMAAIEERMKKLIDQDYDVIKKMTPRDEVIKVFTDRGEEYKLRLVEDMPEEKAMGLYYHQEYVDMCRGPHVPNTKFLKSFKLTKISGAYWRGDAKNEQLQRIYGTAWADKKQLAAYIKRIEEAENRDHRKIGKALDLFHMQEEAPGMVFWHANGWTIYQVLEQYMRKVQQDNGYQEIKTPQIVDFTLWEKSGHAANYAENMFTTHSESRNYAVKPMNCPCHVQVFNQGLKSYRDLPIRLAEFGSCHRNEPSGSLHGIMRVRGFTQDDAHIFCTKEQIGKEVADFIKLTLDVYKDFGFEEVQMKLSTRPEKRVGDDALWDLAEKSLADALDAAGLEWELQPGEGAFYGPKIEFSLKDCLGRVWQCGTIQCDFNLPVRLDASYVTEENERDQPVMLHRAILGSFERFIGILIEHYAGFMPPWLSPVQACVMNITDSQAEASEQVVAKLKENGLRAISDLRNEKIGFKIRERTLERIPYLLVLGDREVEEGTVNVRTRSGKNLGTMSVDAFIDLVKSAVAERGRYIVE.

The TGS domain occupies 1 to 61; it reads MPIITLPNGD…TEDSTLQIIT (61 aa). The interval 242–533 is catalytic; it reads DHRKIGKALD…LIEHYAGFMP (292 aa). Zn(2+)-binding residues include C333, H384, and H510.

Belongs to the class-II aminoacyl-tRNA synthetase family. As to quaternary structure, homodimer. Zn(2+) serves as cofactor.

Its subcellular location is the cytoplasm. The catalysed reaction is tRNA(Thr) + L-threonine + ATP = L-threonyl-tRNA(Thr) + AMP + diphosphate + H(+). Its function is as follows. Catalyzes the attachment of threonine to tRNA(Thr) in a two-step reaction: L-threonine is first activated by ATP to form Thr-AMP and then transferred to the acceptor end of tRNA(Thr). Also edits incorrectly charged L-seryl-tRNA(Thr). In Acinetobacter baumannii (strain SDF), this protein is Threonine--tRNA ligase.